The chain runs to 128 residues: Small ribosomal subunit protein uS11 (128 aa).

It belongs to the universal ribosomal protein uS11 family. As to quaternary structure, part of the 30S ribosomal subunit. Interacts with proteins S7 and S18. Binds to IF-3.

Functionally, located on the platform of the 30S subunit, it bridges several disparate RNA helices of the 16S rRNA. Forms part of the Shine-Dalgarno cleft in the 70S ribosome. This is Small ribosomal subunit protein uS11 from Phytoplasma australiense.